Here is a 271-residue protein sequence, read N- to C-terminus: Exosome complex component Rrp42 (271 aa).

Belongs to the RNase PH family. Rrp42 subfamily. As to quaternary structure, component of the archaeal exosome complex. Forms a hexameric ring-like arrangement composed of 3 Rrp41-Rrp42 heterodimers. The hexameric ring associates with a trimer of Rrp4 and/or Csl4 subunits.

It localises to the cytoplasm. In terms of biological role, non-catalytic component of the exosome, which is a complex involved in RNA degradation. Contributes to the structuring of the Rrp41 active site. This Methanothermobacter thermautotrophicus (strain ATCC 29096 / DSM 1053 / JCM 10044 / NBRC 100330 / Delta H) (Methanobacterium thermoautotrophicum) protein is Exosome complex component Rrp42.